The sequence spans 128 residues: Large-conductance mechanosensitive channel (128 aa).

Transmembrane regions (helical) follow at residues 11–31 (FALKGNVLDLAVAVVIGAAFG) and 70–90 (GAFIQSIVDFVIIAFAIFIFV).

The protein belongs to the MscL family. In terms of assembly, homopentamer.

Its subcellular location is the cell membrane. Functionally, channel that opens in response to stretch forces in the membrane lipid bilayer. May participate in the regulation of osmotic pressure changes within the cell. The chain is Large-conductance mechanosensitive channel from Listeria innocua serovar 6a (strain ATCC BAA-680 / CLIP 11262).